Consider the following 324-residue polypeptide: Viral cathepsin (324 aa).

Positions 1–16 (MNKIMLCLLVCGVVHA) are cleaved as a signal peptide. The propeptide at 17–113 (ATYDLLKAPN…VILDRPPDRG (97 aa)) is activation peptide. Disulfide bonds link cysteine 134–cysteine 175, cysteine 168–cysteine 208, and cysteine 263–cysteine 311. Residue cysteine 137 is part of the active site. The N-linked (GlcNAc...) asparagine; by host glycan is linked to asparagine 159. Catalysis depends on residues histidine 270 and asparagine 290.

The protein belongs to the peptidase C1 family. Synthesized as an inactive proenzyme and activated by proteolytic removal of the inhibitory propeptide.

The catalysed reaction is Endopeptidase of broad specificity, hydrolyzing substrates of both cathepsin L and cathepsin B.. Its function is as follows. Cysteine protease that plays an essential role in host liquefaction to facilitate horizontal transmission of the virus. May participate in the degradation of foreign protein expressed by the baculovirus system. This Orgyia pseudotsugata (Douglas-fir tussock moth) protein is Viral cathepsin (VCATH).